Reading from the N-terminus, the 312-residue chain is Isoflavone reductase homolog (312 aa).

NADP(+) contacts are provided by residues 10–16 (GGTGYVG), Arg35, and Lys44. Catalysis depends on Lys138, which acts as the Proton acceptor. Arg142 lines the NADP(+) pocket. His270 serves as a coordination point for substrate.

It belongs to the NmrA-type oxidoreductase family. Isoflavone reductase subfamily.

This is Isoflavone reductase homolog from Lupinus albus (White lupine).